Reading from the N-terminus, the 363-residue chain is Homeobox protein DTH-2 (363 aa).

Positions 133–192 form a DNA-binding region, homeobox; sequence RRKRRILFSQAQIYELERRFKQQKYLSAPEREHLANLINLTPTQVKIWFQNHRYKCKRSQ. The disordered stretch occupies residues 189–246; it reads KRSQKDKEKEQQKEKSYHLKKNIVDDKERSPNKQICNASSSDRSTPEEPVAKAKESGL. The span at 191–219 shows a compositional bias: basic and acidic residues; the sequence is SQKDKEKEQQKEKSYHLKKNIVDDKERSP. Polar residues predominate over residues 220–231; the sequence is NKQICNASSSDR. Positions 232-246 are enriched in basic and acidic residues; the sequence is STPEEPVAKAKESGL.

This sequence belongs to the NK-2 homeobox family. As to expression, intestine and unidentified peripheral parenchymal cells. Slightly higher levels in the cephalic region compared to other body regions.

It localises to the nucleus. Its function is as follows. This protein might be involved in determination and/or differentiation of nerve cells in the continuous replacement of neurons in the cephalic region. This is Homeobox protein DTH-2 (DTH-2) from Girardia tigrina (Planarian).